The sequence spans 71 residues: Ranatuerin-2P (71 aa).

The signal sequence occupies residues M1 to S20. Residues L21 to G44 constitute a propeptide that is removed on maturation. C66 and C71 are oxidised to a cystine.

Expressed by the skin glands.

Its subcellular location is the secreted. Antibacterial activity against Gram-positive bacterium S.aureus and Gram-negative bacterium E.coli. Has activity against C.albicans. The sequence is that of Ranatuerin-2P from Lithobates pipiens (Northern leopard frog).